A 169-amino-acid chain; its full sequence is NADH-quinone oxidoreductase subunit B (169 aa).

Residues C42, C43, C107, and C136 each coordinate [4Fe-4S] cluster.

The protein belongs to the complex I 20 kDa subunit family. In terms of assembly, NDH-1 is composed of 14 different subunits. Subunits NuoB, C, D, E, F, and G constitute the peripheral sector of the complex. Requires [4Fe-4S] cluster as cofactor.

It is found in the cell inner membrane. The enzyme catalyses a quinone + NADH + 5 H(+)(in) = a quinol + NAD(+) + 4 H(+)(out). In terms of biological role, NDH-1 shuttles electrons from NADH, via FMN and iron-sulfur (Fe-S) centers, to quinones in the respiratory chain. The immediate electron acceptor for the enzyme in this species is believed to be ubiquinone. Couples the redox reaction to proton translocation (for every two electrons transferred, four hydrogen ions are translocated across the cytoplasmic membrane), and thus conserves the redox energy in a proton gradient. The chain is NADH-quinone oxidoreductase subunit B from Sulfurimonas denitrificans (strain ATCC 33889 / DSM 1251) (Thiomicrospira denitrificans (strain ATCC 33889 / DSM 1251)).